An 88-amino-acid chain; its full sequence is Small ribosomal subunit protein bS20 (88 aa).

Disordered stretches follow at residues 1–29 (MANTAQARKRARQAVKQNEHNSSLRSKLR) and 69–88 (KNTASRQKSRLSAAIKAMAA).

Belongs to the bacterial ribosomal protein bS20 family.

Binds directly to 16S ribosomal RNA. The chain is Small ribosomal subunit protein bS20 from Polynucleobacter asymbioticus (strain DSM 18221 / CIP 109841 / QLW-P1DMWA-1) (Polynucleobacter necessarius subsp. asymbioticus).